The primary structure comprises 1302 residues: DNA-directed RNA polymerase subunit beta (1302 aa).

It belongs to the RNA polymerase beta chain family. The RNAP catalytic core consists of 2 alpha, 1 beta, 1 beta' and 1 omega subunit. When a sigma factor is associated with the core the holoenzyme is formed, which can initiate transcription.

It catalyses the reaction RNA(n) + a ribonucleoside 5'-triphosphate = RNA(n+1) + diphosphate. DNA-dependent RNA polymerase catalyzes the transcription of DNA into RNA using the four ribonucleoside triphosphates as substrates. The sequence is that of DNA-directed RNA polymerase subunit beta from Spiroplasma citri.